The sequence spans 517 residues: MDIIGGQHLRQMWDDLADVYGHKTALICESSGGVVNRYSYLELNQEINRTANLFYTLGIRKGDKVALHLDNCPEFIFCWFGLAKIGAIMVPINARLLREESAWILQNSQACLLVTSAQFYPMYQQIQQEDATQLRHICLTDVALPADDGVSSFTQLKNQQPATLCYAPPLSTDDTAEILFTSGTTSRPKGVVITHYNLRFAGYYSAWQCALRDDDVYLTVMPAFHIDCQCTAAMAAFSAGATFVLVEKYSARAFWGQVQKYRATITECIPMMIRTLMVQPPSANDQQHRLREVMFYLNLSAQEKDAFCERFGVRLLTSYGMTETIVGIIGDRPGDKRRWPSIGRAGFCYEAEIRDDHNRPLPAGEIGEICIKGVPGKTIFKEYFLNPKATAKVLEADGWLHTGDTGYRDEEGFFYFADRRCNMIKRGGENVSCVELENIIAAHPKIQDIVVVGIKDSIRDEAIKAFVVLNEGETLSEEEFFRFCEQNMAKFKVPSYLEIRKDLPRNCSGKIIRKNLK.

Belongs to the ATP-dependent AMP-binding enzyme family.

The enzyme catalyses 4-(trimethylamino)butanoate + ATP + CoA = 4-(trimethylamino)butanoyl-CoA + AMP + diphosphate. It carries out the reaction crotonobetaine + ATP + CoA = crotonobetainyl-CoA + AMP + diphosphate. The catalysed reaction is (R)-carnitine + ATP + CoA = (R)-carnitinyl-CoA + AMP + diphosphate. The protein operates within amine and polyamine metabolism; carnitine metabolism. Catalyzes the transfer of CoA to carnitine, generating the initial carnitinyl-CoA needed for the CaiB reaction cycle. Also has activity toward crotonobetaine and gamma-butyrobetaine. The chain is Crotonobetaine/carnitine--CoA ligase from Escherichia coli O7:K1 (strain IAI39 / ExPEC).